Reading from the N-terminus, the 461-residue chain is Coronin-1A (461 aa).

An N-acetylserine modification is found at Ser2. Ser2 bears the Phosphoserine; by PKC mark. WD repeat units follow at residues 13 to 63 (HVFG…LVLP), 73 to 110 (NVPL…MVWE), 123 to 160 (PVIT…LVWD), 164 to 204 (GAAV…RVIE), 207 to 251 (KGTV…ALWD), 258 to 296 (PLSL…RYFE), and 302 to 349 (PFLH…EPIA). Residues 403–418 (ELRVNRGLDSARRRAT) show a composition bias toward basic and acidic residues. Positions 403 to 434 (ELRVNRGLDSARRRATPEPSGTPSSDTVSRLE) are disordered. Ser412 carries the phosphoserine; by PKC modification. A Phosphothreonine modification is found at Thr418. Positions 421-430 (PSGTPSSDTV) are enriched in polar residues. At Ser422 the chain carries Phosphoserine. The stretch at 424-461 (TPSSDTVSRLEEDVRNLNAIVQKLQERLDRLEETVQAK) forms a coiled coil.

The protein belongs to the WD repeat coronin family. As to quaternary structure, binds actin. Phosphorylation at Ser-412 by PKC strongly down-regulates the association with actin. In terms of processing, polyubiquitinated by RNF128 with 'Lys-48'-linked chains, leading to proteasomal degradation. As to expression, expressed in spleen, lymph nodes, thymus, brain and at very lower levels in lung. Also expressed in cells of the lymphoid/myeloid lineage. Not expressed in Kuffper cells.

Its subcellular location is the cytoplasm. The protein localises to the cytoskeleton. It localises to the cell cortex. The protein resides in the cytoplasmic vesicle. It is found in the phagosome membrane. May be a crucial component of the cytoskeleton of highly motile cells, functioning both in the invagination of large pieces of plasma membrane, as well as in forming protrusions of the plasma membrane involved in cell locomotion. In mycobacteria-infected cells, its retention on the phagosomal membrane prevents fusion between phagosomes and lysosomes. This is Coronin-1A (Coro1a) from Mus musculus (Mouse).